Consider the following 103-residue polypeptide: Histone H4 (103 aa).

The span at 1–14 shows a compositional bias: gly residues; sequence MSGRGKGGKGLGKG. A disordered region spans residues 1 to 20; the sequence is MSGRGKGGKGLGKGGAKRHR. Residue Lys-6 is modified to N6-acetyl-N6-methyllysine; alternate. Lys-6, Lys-9, and Lys-13 each carry N6-acetyllysine; alternate. 3 positions are modified to N6-methyllysine; alternate: Lys-6, Lys-9, and Lys-13. N6-butyryllysine; alternate is present on residues Lys-9 and Lys-13. Lys-13 is subject to N6-acetyl-N6-methyllysine; alternate. Lys-17 is modified (N6-acetyllysine). The DNA-binding element occupies 17–21; sequence KRHRK. N6-succinyllysine is present on Lys-32. At Arg-56 the chain carries Omega-N-methylarginine. Residues Ser-61 and Ser-65 each carry the phosphoserine modification. At Lys-78 the chain carries N6-succinyllysine. Lys-80 bears the N6-acetyllysine mark. N6-glutaryllysine is present on Lys-92.

The protein belongs to the histone H4 family. As to quaternary structure, the nucleosome is a histone octamer containing two molecules each of H2A, H2B, H3 and H4 assembled in one H3-H4 heterotetramer and two H2A-H2B heterodimers. The octamer wraps approximately 147 bp of DNA. Histone H4 is a component of the UAF (upstream activation factor) complex which consists of UAF30, RRN5, RRN9, RRN10, and histones H3 and H4. Glutarylation at Lys-92 (H4K91glu) destabilizes nucleosomes by promoting dissociation of the H2A-H2B dimers from nucleosomes.

The protein resides in the nucleus. Its subcellular location is the chromosome. In terms of biological role, core component of nucleosome. Nucleosomes wrap and compact DNA into chromatin, limiting DNA accessibility to the cellular machineries which require DNA as a template. Histones thereby play a central role in transcription regulation, DNA repair, DNA replication and chromosomal stability. DNA accessibility is regulated via a complex set of post-translational modifications of histones, also called histone code, and nucleosome remodeling. Component of the UAF (upstream activation factor) complex which interacts with the upstream element of the RNA polymerase I promoter and forms a stable preinitiation complex. Together with SPT15/TBP UAF seems to stimulate basal transcription to a fully activated level. The chain is Histone H4 (HHF1) from Saccharomyces cerevisiae (strain ATCC 204508 / S288c) (Baker's yeast).